Reading from the N-terminus, the 620-residue chain is Chaperone protein HscA homolog (620 aa).

The protein belongs to the heat shock protein 70 family.

Functionally, chaperone involved in the maturation of iron-sulfur cluster-containing proteins. Has a low intrinsic ATPase activity which is markedly stimulated by HscB. The sequence is that of Chaperone protein HscA homolog from Pseudomonas fluorescens (strain ATCC BAA-477 / NRRL B-23932 / Pf-5).